The following is a 142-amino-acid chain: Large ribosomal subunit protein uL16 (142 aa).

Belongs to the universal ribosomal protein uL16 family. Part of the 50S ribosomal subunit.

Functionally, binds 23S rRNA and is also seen to make contacts with the A and possibly P site tRNAs. The protein is Large ribosomal subunit protein uL16 of Trichormus variabilis (strain ATCC 29413 / PCC 7937) (Anabaena variabilis).